The following is a 402-amino-acid chain: MMVALPGASASLVLFLAAFLPPLQHAQDPAMVHYIYQRFQVLEQGLEKCAQTTRAYIQDFQEFSKNLSTMLGRCQTHTNEYRSAVDNLALRVERAQREIDYLQYLRESDFCVESEEKTSAEKVLQEAEEEKKIRTLLNTSCDNMLMAIKSLKIVKKTVDPEGSWMKDAGSTSAKVYLLAGSRNNTVWEFANLRAFMEDSVKPGPRKLTLPLSWQGSGQVVYQSFLFFHNQGTSNEIIKYNLQKKTVEDRMLLPGGAGRAPIYQHSLSTYIDLAVDEHGLWAIHSGPGIQGHLVLTKIEAGTLGIEHSWDTPCRSQDAEASFLLCGVLYVVYSSGGQGPHRITCVYDPLGTVREEHLPNLFFPRRARSHSMIHYNPRDKQLYAWNEGYQIIYKLQTKKKLPLE.

Positions 1-28 (MMVALPGASASLVLFLAAFLPPLQHAQD) are cleaved as a signal peptide. Asn-66 carries N-linked (GlcNAc...) asparagine glycosylation. The stretch at 73–135 (RCQTHTNEYR…EAEEEKKIRT (63 aa)) forms a coiled coil. N-linked (GlcNAc...) asparagine glycosylation is found at Asn-138 and Asn-183. Residues 140–397 (SCDNMLMAIK…QIIYKLQTKK (258 aa)) form the Olfactomedin-like domain. Cys-141 and Cys-324 form a disulfide bridge.

Highly N-glycosylated.

The protein localises to the secreted. The sequence is that of Olfactomedin-like protein 1 (Olfml1) from Rattus norvegicus (Rat).